The following is a 1018-amino-acid chain: UPF0182 protein Francci3_3781 (1018 aa).

7 helical membrane passes run 13 to 33 (TKVL…IAIF), 60 to 80 (ILLF…NIVL), 109 to 129 (MLLI…LSAA), 167 to 187 (FLLG…LLTH), 208 to 228 (AHIS…YYLD), 250 to 270 (AVLP…VLFI), and 283 to 303 (LGAG…PAIV). Low complexity-rich tracts occupy residues 886-896 (TTDAGQDGTPA) and 960-980 (SSPA…SVPA). Disordered regions lie at residues 886–920 (TTDA…AVGD) and 960–1018 (SSPA…PAPG). The segment covering 981–995 (SPVPASPAAKPPAPS) has biased composition (pro residues).

The protein belongs to the UPF0182 family.

Its subcellular location is the cell membrane. The protein is UPF0182 protein Francci3_3781 of Frankia casuarinae (strain DSM 45818 / CECT 9043 / HFP020203 / CcI3).